The following is a 92-amino-acid chain: Phospholemman (92 aa).

Positions 1–20 are cleaved as a signal peptide; sequence MASLSHILVLCVGLLAMVNA. The Extracellular portion of the chain corresponds to 21-35; it reads EAPQEHDPFTYDYQS. A helical membrane pass occupies residues 36 to 56; that stretch reads LRIGGLIIAGILFILGILIVL. Residues 57–92 lie on the Cytoplasmic side of the membrane; sequence SRRCRCKFNQQQRTGEPDEEEGTFRSSIRRLSTRRR. The S-palmitoyl cysteine moiety is linked to residue cysteine 60. Cysteine 62 is modified (S-glutathionyl cysteine; alternate). Residue cysteine 62 is the site of S-palmitoyl cysteine; alternate attachment. The tract at residues 65–92 is disordered; the sequence is NQQQRTGEPDEEEGTFRSSIRRLSTRRR. Threonine 79 carries the phosphothreonine modification. Residue serine 82 is modified to Phosphoserine. Serine 83 carries the phosphoserine; by PKA and PKC modification. Residues 83 to 92 are compositionally biased toward basic residues; that stretch reads SIRRLSTRRR. Residue serine 88 is modified to Phosphoserine; by PKA. Threonine 89 bears the Phosphothreonine; by PKC mark.

The protein belongs to the FXYD family. As to quaternary structure, homotetramer. Monomer. Regulatory subunit of the sodium/potassium-transporting ATPase (NKA) which is composed of a catalytic alpha subunit, an auxiliary non-catalytic beta subunit and an additional regulatory subunit. The monomeric form associates with NKA while the oligomeric form does not. Interacts with the catalytic alpha-1 subunit ATP1A1. Also interacts with the catalytic alpha-2 and alpha-3 subunits ATP1A2 and ATP1A3. Very little interaction with ATP1A1, ATP1A2 or ATP1A3 when phosphorylated at Ser-83. Interacts with the non-catalytic beta-1 subunit ATP1B1. Oxidative stress decreases interaction with ATP1A1 but increases interaction with ATP1B1. Major plasma membrane substrate for cAMP-dependent protein kinase (PKA) and protein kinase C (PKC) in several different tissues. Phosphorylated in response to insulin and adrenergic stimulation. Phosphorylation at Ser-88 stimulates sodium/potassium-transporting ATPase activity while the unphosphorylated form inhibits sodium/potassium-transporting ATPase activity. Phosphorylation increases tetramerization, decreases binding to ATP1A1 and reduces inhibition of ATP1A1 activity. Phosphorylation at Ser-83 leads to greatly reduced interaction with ATP1A1, ATP1A2 and ATP1A3. May be phosphorylated by DMPK. Post-translationally, palmitoylation increases half-life and stability and is enhanced upon phosphorylation at Ser-88 by PKA. In the brain, detected in cerebellum and choroid plexus (at protein level).

It is found in the cell membrane. Its subcellular location is the sarcolemma. The protein localises to the apical cell membrane. The protein resides in the membrane. It localises to the caveola. It is found in the T-tubule. Its function is as follows. Associates with and regulates the activity of the sodium/potassium-transporting ATPase (NKA) which transports Na(+) out of the cell and K(+) into the cell. Inhibits NKA activity in its unphosphorylated state and stimulates activity when phosphorylated. Reduces glutathionylation of the NKA beta-1 subunit ATP1B1, thus reversing glutathionylation-mediated inhibition of ATP1B1. Contributes to female sexual development by maintaining the excitability of neurons which secrete gonadotropin-releasing hormone. The polypeptide is Phospholemman (Bos taurus (Bovine)).